A 233-amino-acid polypeptide reads, in one-letter code: Small ribosomal subunit protein uS3 (233 aa).

The 69-residue stretch at 39–107 (VRQFLASELT…PSQINIAEVR (69 aa)) folds into the KH type-2 domain.

The protein belongs to the universal ribosomal protein uS3 family. As to quaternary structure, part of the 30S ribosomal subunit. Forms a tight complex with proteins S10 and S14.

Functionally, binds the lower part of the 30S subunit head. Binds mRNA in the 70S ribosome, positioning it for translation. This chain is Small ribosomal subunit protein uS3, found in Baumannia cicadellinicola subsp. Homalodisca coagulata.